We begin with the raw amino-acid sequence, 287 residues long: ATP synthase gamma chain (287 aa).

It belongs to the ATPase gamma chain family. In terms of assembly, F-type ATPases have 2 components, CF(1) - the catalytic core - and CF(0) - the membrane proton channel. CF(1) has five subunits: alpha(3), beta(3), gamma(1), delta(1), epsilon(1). CF(0) has three main subunits: a, b and c.

Its subcellular location is the cell inner membrane. Its function is as follows. Produces ATP from ADP in the presence of a proton gradient across the membrane. The gamma chain is believed to be important in regulating ATPase activity and the flow of protons through the CF(0) complex. The sequence is that of ATP synthase gamma chain from Ruthia magnifica subsp. Calyptogena magnifica.